The following is a 491-amino-acid chain: MSTQWEVVIGLETHAQLSTVSKIFSGASTQFGAEPNTQACPVDLALPGVLPVLNRGAVERAIRFGLAIGATIAPRSIFARKNYFYPDLPKGYQISQYEIPVVQGGAITIQVPANEKAGKPAYEKTVNLTRAHLEEDAGKSLHEDFAGMTGIDLNRAGTPLLEIVTEPEMRSAAEAVAYAKALHALVVWLGICDGNMQEGSFRCDANVSVRPVGQEKFGTRAEIKNLNSFRFLEEAINYEVRRQIELIEDGGEVVQETRLYDPDKRETRSMRSKEDAHDYRYFPDPDLMPLVIGRDWVERVQAGMPELPAAMQQRFVEQYGVSAYDAGVLTSTKAMAAYFEAVVAKAGAANAKIAANWLMGDVSSQLNRDGIEIDAIPVSAAQLALLLQRIADGTISNKIAKEVFATMWEEKASDDGAADRIIEAKGLKQISDTGALEAIIDEVLAANAKSVEEFRAGKEKAFNALIGQAMKATKGKANPQQVNELLKKKLG.

It belongs to the GatB/GatE family. GatB subfamily. In terms of assembly, heterotrimer of A, B and C subunits.

The catalysed reaction is L-glutamyl-tRNA(Gln) + L-glutamine + ATP + H2O = L-glutaminyl-tRNA(Gln) + L-glutamate + ADP + phosphate + H(+). It catalyses the reaction L-aspartyl-tRNA(Asn) + L-glutamine + ATP + H2O = L-asparaginyl-tRNA(Asn) + L-glutamate + ADP + phosphate + 2 H(+). Allows the formation of correctly charged Asn-tRNA(Asn) or Gln-tRNA(Gln) through the transamidation of misacylated Asp-tRNA(Asn) or Glu-tRNA(Gln) in organisms which lack either or both of asparaginyl-tRNA or glutaminyl-tRNA synthetases. The reaction takes place in the presence of glutamine and ATP through an activated phospho-Asp-tRNA(Asn) or phospho-Glu-tRNA(Gln). This Burkholderia multivorans (strain ATCC 17616 / 249) protein is Aspartyl/glutamyl-tRNA(Asn/Gln) amidotransferase subunit B.